Here is a 1603-residue protein sequence, read N- to C-terminus: GATOR1 complex protein DEPDC5 (1603 aa).

Disordered regions lie at residues 427–450 (GKKP…KESE), 484–527 (VRER…SSLG), and 696–720 (LSNS…VSTS). The span at 430–439 (PASEKAKNGR) shows a compositional bias: basic and acidic residues. The span at 494–508 (SASSCDVSSSPSLPS) shows a compositional bias: low complexity. At Ser505 the chain carries Phosphoserine. Polar residues-rich tracts occupy residues 518–527 (SQASDDSSLG) and 696–707 (LSNSGAGMNPRT). A Phosphoserine; by PIM1 modification is found at Ser1002. Positions 1135 to 1153 (DRGNSQTFGNSQNIGEQGY) are enriched in polar residues. The interval 1135-1165 (DRGNSQTFGNSQNIGEQGYSSTNSSDSSSQQ) is disordered. A compositionally biased stretch (low complexity) spans 1154 to 1165 (SSTNSSDSSSQQ). The 76-residue stretch at 1187–1262 (PSTGVQLLSE…YGFYFYKIVT (76 aa)) folds into the DEP domain. Residue Ser1530 is modified to Phosphoserine; by PKB/AKT1 and PIM1.

The protein belongs to the IML1 family. In terms of assembly, within the GATOR complex, component of the GATOR1 subcomplex, made of DEPDC5, NPRL2 and NPRL3. GATOR1 mediates the strong interaction of the GATOR complex with small GTPases Rag (RagA/RRAGA, RagB/RRAGB, RagC/RRAGC and/or RagD/RRAGD) heterodimers. Interacts with SAMTOR; interaction is direct and takes place in presence of methionine, leading to inhibit the activity of the GATOR1 complex. Post-translationally, phosphorylation at Ser-1002 and Ser-1530 by AKT1 and PIM1 inhibit the activity of DEPDC5, releasing inhibition of the mTORC1 pathway. Ubiquitinated. Amino acid-induced 'Lys-48'-linked polyubiquitination of DEPDC5 by the BCR(KLHL22) ubiquitin ligase complex leads to DEPDC5 proteasomal degradation and inhibition of the GATOR1 complex. Ubiquitination may occur at multiple lysines. As to expression, expressed in developing and adult brain.

The protein resides in the lysosome membrane. It localises to the cytoplasm. Its subcellular location is the cytosol. It is found in the perinuclear region. As a component of the GATOR1 complex functions as an inhibitor of the amino acid-sensing branch of the mTORC1 pathway. In response to amino acid depletion, the GATOR1 complex has GTPase activating protein (GAP) activity and strongly increases GTP hydrolysis by RagA/RRAGA (or RagB/RRAGB) within heterodimeric Rag complexes, thereby turning them into their inactive GDP-bound form, releasing mTORC1 from lysosomal surface and inhibiting mTORC1 signaling. In the presence of abundant amino acids, the GATOR1 complex is negatively regulated by GATOR2, the other GATOR subcomplex, in this amino acid-sensing branch of the TORC1 pathway. Within the GATOR1 complex, DEPDC5 mediates direct interaction with the nucleotide-binding pocket of small GTPases Rag (RagA/RRAGA, RagB/RRAGB, RagC/RRAGC and/or RagD/RRAGD) and coordinates their nucleotide loading states by promoting RagA/RRAGA or RagB/RRAGB into their GDP-binding state and RagC/RRAGC or RagD/RRAGD into their GTP-binding state. However, it does not execute the GAP activity, which is mediated by NPRL2. In Homo sapiens (Human), this protein is GATOR1 complex protein DEPDC5.